The primary structure comprises 281 residues: Arylamine N-acetyltransferase (281 aa).

The active-site Acyl-thioester intermediate is the Cys69. Residues His107 and Asp122 contribute to the active site. N6-acetyllysine is present on residues Lys214 and Lys281.

It belongs to the arylamine N-acetyltransferase family. Homodimer. In terms of processing, acetylated on Lys-214 and Lys-281. Deacetylated by CobB.

The protein localises to the cytoplasm. It carries out the reaction an arylamine + acetyl-CoA = an N-acetylarylamine + CoA. It catalyses the reaction an N-hydroxyarylamine + acetyl-CoA = an N-acetoxyarylamine + CoA. Inhibited by salicylic acid, acetylsalicylic acid, 2,6-dichrolo-4-nitrophenol, N-ethylmaleimide and iodoacetamide. Its function is as follows. Catalyzes the acetyl-CoA-dependent N-acetylation of aromatic amines, and, probably, the O-acetylation of N-hydroxyarylamines. In vitro, catalyzes the N-acetylation of various arylamines such as aminobenzoic acid, aminophenol, aminotoluene, phenetidine, anisidine, aniline, isoniazid and 2-amino-fluorene. N-hydroxyarylamine O-acetyltransferase activity has not been assayed directly, however, NhoA activity is required for the mutagenicity of nitroaromatic compounds, suggesting that it also has O-acetyltransferase activity. This chain is Arylamine N-acetyltransferase (nhoA), found in Escherichia coli (strain K12).